Consider the following 61-residue polypeptide: Double gene block protein 2 (61 aa).

Residues 1–12 lie on the Cytoplasmic side of the membrane; that stretch reads MACCRCDSSPGD. Residues 13-33 traverse the membrane as a helical; Signal-anchor for type II membrane protein segment; the sequence is YSGALLILFISFVFFYITSLS. Residues 34–61 lie on the Lumenal side of the membrane; it reads PQGNTYVHHFDSSSVKTQYVGISTNGDG.

The protein belongs to the gammacarmovirus double gene block protein 2 family.

The protein localises to the host endoplasmic reticulum membrane. In terms of biological role, cell-to-cell movement function. In Melon necrotic spot virus (MNSV), this protein is Double gene block protein 2.